The primary structure comprises 1839 residues: MDFNVKDFGALGDGASDDTAAIQAAIDAAHAAGGGTVYLPAGEYRVSGGEEPSDGALTIKSNVYIVGAGMGETVIKMVDGWTQNVTGMVRSAYGEETSNFGMSDLTLDGNRDNLSAKVDGWFNGYIPGQDGADRDVTLERVEIREMSGYGFDPHEQTINLTIRDSVAHDNGLDGFVADYQVGGVFENNVSYNNDRHGFNIVTSTNDFVLSNNVAYGNGGAGLVVQRGSYDLPHPYDILIDGGAYYDNALEGVQLKMTHDVTLQNAEIYGNGLYGVRVYGAQDVQLLDNQIHDNSQNGAYAEVLLQSYDDTAGVSGNFYVTTGTWLEGNVISGSANSTFGIQERADGTDYSSLYANTIDGVQNGTVRLYGANSTVSEQPSSGQQATLEGTAGNDVLSGTGAHELILGLAGNDRLDGGAGDDTLDGGAGRDTLTGGAGADTFRFSAREDSHRTDSASFTDLITDFDASQDRIDLSALGFTGLGNGYDGTLAVTTGSGGTRTYLKSYEVDAQGRRFEIALDGNFVGQFNDGNLLFDAAPVTGTEGNDNLSGTDAGETLLGYGGNDTLNGGAGNDILVGGAGRDTLTGGAGADVFRFEALSDSQRNYTAGDNQGDYIIDFAVGEDRIDVSALGYTGLGNGRNGTLAVVLNSAGDRTYVKSYDTDANGYNFELSLAGNYQGLLGAEQFVFATPPEQATIEGTDGNDSLQGTGADELLLGLGGRDSLNGGAGDDVLDGGAERDTLTGGTGADTFLFSARTDSYRTDSASFTDLITDFDPAQDRIDLSGLGFSGFGNGYDGTLLLQVNAAGTRTYLKSLEADADGQRFEIALDGDFSGQLDSGNVIFEAGVFNAKDFGALGDGASDDRPAIQAAIDAAYAAGGGTVYLPAGEYRVSPTGDPGDGCLMLKDGVYLVGAGMGETVIKLIDGSDQKITGMVRSAYGEETSNFGMSDLTLDGNRDNTSGKVDGWFNGYIPGQDGADRNVTLERVEIREMSGYGFDPHEQTINLTIRDSVAHDNGLDGFVADYLVDSVFENNVAYNNDRHGFNVVTSTYDFTLSNNVAYGNGGAGLVIQRGAEDLAQPTDILIDGGAYYDNALEGVLLKMTNNITLQNAEIYGNGYSGVRLYGTEDVQILNNQIHDNAQNVAYAEVLLQSFNDVGVSGNFYATTGTWIEGNVISGSANSTYGIEERNDGTDYSSLYANTIDGVQTGAVRLNGAHSIVSDQPGTGQQATLEGTTGNDTLGGSDAHETLLGLDGDDRLDGGAGNDILDGGVGRDTLTGGAGADTFRFSAREDSYRTASTSFTDLITDFDPAQDRIDLSALGFTGLGDGYDGTLLVTTGSGGSRTYLKSLEADAEGRRFEIALDGDFVGLLDASNLIFERPAIEGDAGDNALLGTSVAETLLGHAGNDTLDGAGGDDILVGGAGSDSLTGGAGADVFRFDALSDSQRNYDTGDNQGDRITDFAVGEDKLDVSALGFTGLGDGYNGTLVLVLNSAGDRTYVKSYENGADGYRFEFSLDGNYQGLLGNEDFIFATPSGQQLLEGTAGNDSLQGTAADEVIHGGSGRDTLAGGAGADVFRFSELTDSYRTDSASYADLITDFDASEDRIDLSGLGFSGLGNGYGGTLALQVNSAGTRTYLKSYEANAAGERFELSLDGDLSGLDESHLVFDERVVLAGGDGNDTLSGGSAAEELLGGAGNDSLSGGAGNDILDGGAGRDTLSGGSGSDIFRFGDALDSFRNYNSGANVTDSIADFTHGADLIDLSALGYTGLGDGYNGTLAIVLNDAGTKTYLKDRGGDAEGNRFEIALEGNHADQLDASDFIFATAAAATGIEVVGSTPAEEQPVV.

PbH1 repeat units follow at residues 133–155, 157–179, 180–202, 204–226, 257–279, 280–302, 320–342, and 347–369; these read DRDV…DPHE, TINL…VADY, QVGG…NIVT, TNDF…VVQR, THDV…RVYG, AQDV…YAEV, TTGT…GIQE, and TDYS…RLYG. Over residues 372-386 the composition is skewed to polar residues; sequence STVSEQPSSGQQATL. Residues 372 to 392 are disordered; sequence STVSEQPSSGQQATLEGTAGN. Hemolysin-type calcium-binding repeat units follow at residues 387–399, 406–422, 424–440, 538–550, 557–573, 574–591, 695–709, 714–730, and 732–748; these read EGTA…SGTG, GLAG…DDTL, GGAG…ADTF, TGTE…SGTD, GYGG…NDIL, VGGA…ADVF, EGTD…TGAD, GLGG…DDVL, and GGAE…ADTF. 8 PbH1 repeats span residues 975–997, 999–1021, 1022–1044, 1046–1068, 1099–1121, 1122–1143, 1161–1183, and 1188–1210; these read DRNV…DPHE, TINL…VADY, LVDS…NVVT, TYDF…VIQR, TNNI…RLYG, TEDV…AYAE, TTGT…GIEE, and TDYS…RLNG. Residues 1215–1236 show a composition bias toward polar residues; the sequence is VSDQPGTGQQATLEGTTGNDTL. The tract at residues 1215–1238 is disordered; that stretch reads VSDQPGTGQQATLEGTTGNDTLGG. Hemolysin-type calcium-binding repeat units lie at residues 1229 to 1243, 1247 to 1263, 1265 to 1281, 1398 to 1414, 1415 to 1432, 1536 to 1552, 1554 to 1571, 1670 to 1681, 1688 to 1704, and 1706 to 1722; these read GTTG…DAHE, GLDG…NDIL, GGVG…ADTF, GHAG…DDIL, VGGA…ADVF, EGTA…ADEV, HGGS…ADVF, GGDGNDTLSGGS, GGAG…NDIL, and GGAG…SDIF.

The protein belongs to the D-mannuronate C5-epimerase family. Ca(2+) is required as a cofactor.

Its subcellular location is the secreted. It catalyses the reaction [(1-&gt;4)-beta-D-mannuronosyl](n) = [alginate](n). Its pathway is glycan biosynthesis; alginate biosynthesis. With respect to regulation, inhibited by zinc. Converts beta-D-mannuronic acid (M) to alpha-L-guluronic acid (G), producing a polymer with gel-forming capacity, required for the formation of the cyst coat. The protein is Mannuronan C5-epimerase AlgE3 of Azotobacter vinelandii.